The following is a 240-amino-acid chain: ATP synthase subunit a (240 aa).

Transmembrane regions (helical) follow at residues L21–F41, A83–I103, D116–V136, L184–I204, and L207–L227.

It belongs to the ATPase A chain family. In terms of assembly, F-type ATPases have 2 components, CF(1) - the catalytic core - and CF(0) - the membrane proton channel. CF(1) has five subunits: alpha(3), beta(3), gamma(1), delta(1), epsilon(1). CF(0) has three main subunits: a(1), b(2) and c(9-12). The alpha and beta chains form an alternating ring which encloses part of the gamma chain. CF(1) is attached to CF(0) by a central stalk formed by the gamma and epsilon chains, while a peripheral stalk is formed by the delta and b chains.

It localises to the cell membrane. Key component of the proton channel; it plays a direct role in the translocation of protons across the membrane. The sequence is that of ATP synthase subunit a from Macrococcus caseolyticus (strain JCSC5402) (Macrococcoides caseolyticum).